The chain runs to 385 residues: GDP-D-glucose phosphorylase 1 (385 aa).

His218 functions as the Tele-GMP-histidine intermediate in the catalytic mechanism.

It belongs to the GDPGP1 family.

Its subcellular location is the cytoplasm. The enzyme catalyses GDP-alpha-D-glucose + phosphate = alpha-D-glucose 1-phosphate + GDP + H(+). Its function is as follows. Specific and highly efficient GDP-D-glucose phosphorylase regulating the levels of GDP-D-glucose in cells. The polypeptide is GDP-D-glucose phosphorylase 1 (GDPGP1) (Bos taurus (Bovine)).